The sequence spans 576 residues: Putative export ATP-binding/permease protein RC1073 (576 aa).

An ABC transmembrane type-1 domain is found at 20 to 303; that stretch reads LIIVMISLLS…IFELLSEMHL (284 aa). The next 6 helical transmembrane spans lie at 21–41, 57–77, 135–155, 158–178, 242–262, and 277–297; these read IIVMISLLSVSASLLLIGSVF, VDNSILYICLLIIILSIASFF, FLSFFIRNSVMLIGSITLMFF, FKLASIVIITIPILLIPLIKF, ALFFAISIAVIFLAITLVVWI, and IISFIYYAIIAGVSCGGIFEL. Residues 336-572 enclose the ABC transporter domain; the sequence is IEFKNVDFTY…SEIYRNICRE (237 aa). ATP is bound at residue 371–378; the sequence is GRSGAGKS.

Belongs to the ABC transporter superfamily. Homodimer.

The protein resides in the cell inner membrane. Its function is as follows. Part of an ABC transporter complex. Transmembrane domains (TMD) form a pore in the inner membrane and the ATP-binding domain (NBD) is responsible for energy generation. The chain is Putative export ATP-binding/permease protein RC1073 from Rickettsia conorii (strain ATCC VR-613 / Malish 7).